A 94-amino-acid chain; its full sequence is ATP synthase F(0) complex subunit f, mitochondrial (94 aa).

An N-acetylalanine modification is found at alanine 2. Serine 3 is modified (phosphoserine). An N6-acetyllysine modification is found at lysine 22. The chain crosses the membrane as a helical span at residues methionine 68–leucine 85.

The protein belongs to the ATPase F chain family. As to quaternary structure, component of the ATP synthase complex composed at least of ATP5F1A/subunit alpha, ATP5F1B/subunit beta, ATP5MC1/subunit c (homooctomer), MT-ATP6/subunit a, MT-ATP8/subunit 8, ATP5ME/subunit e, ATP5MF/subunit f, ATP5MG/subunit g, ATP5MK/subunit k, ATP5MJ/subunit j, ATP5F1C/subunit gamma, ATP5F1D/subunit delta, ATP5F1E/subunit epsilon, ATP5PF/subunit F6, ATP5PB/subunit b, ATP5PD/subunit d, ATP5PO/subunit OSCP. ATP synthase complex consists of a soluble F(1) head domain (subunits alpha(3) and beta(3)) - the catalytic core - and a membrane F(0) domain - the membrane proton channel (subunits c, a, 8, e, f, g, k and j). These two domains are linked by a central stalk (subunits gamma, delta, and epsilon) rotating inside the F1 region and a stationary peripheral stalk (subunits F6, b, d, and OSCP).

It is found in the mitochondrion. Its subcellular location is the mitochondrion inner membrane. Functionally, subunit f, of the mitochondrial membrane ATP synthase complex (F(1)F(0) ATP synthase or Complex V) that produces ATP from ADP in the presence of a proton gradient across the membrane which is generated by electron transport complexes of the respiratory chain. ATP synthase complex consist of a soluble F(1) head domain - the catalytic core - and a membrane F(1) domain - the membrane proton channel. These two domains are linked by a central stalk rotating inside the F(1) region and a stationary peripheral stalk. During catalysis, ATP synthesis in the catalytic domain of F(1) is coupled via a rotary mechanism of the central stalk subunits to proton translocation. In vivo, can only synthesize ATP although its ATP hydrolase activity can be activated artificially in vitro. Part of the complex F(0) domain. The sequence is that of ATP synthase F(0) complex subunit f, mitochondrial from Homo sapiens (Human).